Consider the following 567-residue polypeptide: Proline--tRNA ligase (567 aa).

This sequence belongs to the class-II aminoacyl-tRNA synthetase family. ProS type 1 subfamily. In terms of assembly, homodimer.

The protein localises to the cytoplasm. The enzyme catalyses tRNA(Pro) + L-proline + ATP = L-prolyl-tRNA(Pro) + AMP + diphosphate. Catalyzes the attachment of proline to tRNA(Pro) in a two-step reaction: proline is first activated by ATP to form Pro-AMP and then transferred to the acceptor end of tRNA(Pro). As ProRS can inadvertently accommodate and process non-cognate amino acids such as alanine and cysteine, to avoid such errors it has two additional distinct editing activities against alanine. One activity is designated as 'pretransfer' editing and involves the tRNA(Pro)-independent hydrolysis of activated Ala-AMP. The other activity is designated 'posttransfer' editing and involves deacylation of mischarged Ala-tRNA(Pro). The misacylated Cys-tRNA(Pro) is not edited by ProRS. This Staphylococcus epidermidis (strain ATCC 35984 / DSM 28319 / BCRC 17069 / CCUG 31568 / BM 3577 / RP62A) protein is Proline--tRNA ligase.